The following is a 478-amino-acid chain: WD repeat-containing protein AAC3 (478 aa).

Disordered regions lie at residues 33-53 (HPLFNYQFPPGGFQHLQQQQQ) and 106-140 (SQIHQQSQQSQLSNNLNSNSKESTNIPKTNTQYTN). A compositionally biased stretch (low complexity) spans 106-125 (SQIHQQSQQSQLSNNLNSNS). Residues 126 to 140 (KESTNIPKTNTQYTN) show a composition bias toward polar residues. WD repeat units lie at residues 163-202 (GNKKKSTSVAWNANGTKIASSGSDGIVRVWNFDPLGNSNN), 226-268 (GHDG…GTVS), 270-307 (NSENIDVRWSPDGQFIVACTRDDHLALIDLPTIKTLKI), 310-349 (FNGEELNQVGWDNNGDLILMANSMGNIEAYKFLPKSTTHV), 357-396 (GHTASIYCMEFDPTGKYLAAGSADSIVSLWDIEDMMCVKT), 399-438 (KSTFPCRSVSFSFDGQFIAASSFESTIEIFHIESSQPIHT), and 440-478 (ECSGVSSLMWHPTLPLLAYAPEINENNKDPSIRVFGYHS).

It belongs to the THOC3 family.

This Dictyostelium discoideum (Social amoeba) protein is WD repeat-containing protein AAC3 (AAC3).